Here is a 409-residue protein sequence, read N- to C-terminus: NADH-quinone oxidoreductase subunit 4 (409 aa).

This sequence belongs to the complex I 49 kDa subunit family. As to quaternary structure, NDH-1 is composed of 15 different subunits, Nqo1 to Nqo15. The complex has a L-shaped structure, with the hydrophobic arm (subunits Nqo7, Nqo8 and Nqo10 to Nqo14) embedded in the membrane and the hydrophilic peripheral arm (subunits Nqo1 to Nqo6, Nqo9 and Nqo15) protruding into the bacterial cytoplasm. The hydrophilic domain contains all the redox centers. This subunit interacts extensively with Nqo6.

It is found in the cell membrane. It catalyses the reaction a quinone + NADH + 5 H(+)(in) = a quinol + NAD(+) + 4 H(+)(out). Functionally, NDH-1 shuttles electrons from NADH, via FMN and iron-sulfur (Fe-S) centers, to quinones in the respiratory chain. The immediate electron acceptor for the enzyme in this species is menaquinone. Couples the redox reaction to proton translocation (for every two electrons transferred, four hydrogen ions are translocated across the cytoplasmic membrane), and thus conserves the redox energy in a proton gradient required for the synthesis of ATP. The Nqo4 subunit may contain the quinone-binding site. The chain is NADH-quinone oxidoreductase subunit 4 (nqo4) from Thermus thermophilus (strain ATCC 27634 / DSM 579 / HB8).